The following is a 216-amino-acid chain: UPF0301 protein BBta_6966 (216 aa).

The protein belongs to the UPF0301 (AlgH) family.

The polypeptide is UPF0301 protein BBta_6966 (Bradyrhizobium sp. (strain BTAi1 / ATCC BAA-1182)).